Reading from the N-terminus, the 448-residue chain is Probable glycine dehydrogenase (decarboxylating) subunit 1 (448 aa).

The protein belongs to the GcvP family. N-terminal subunit subfamily. As to quaternary structure, the glycine cleavage system is composed of four proteins: P, T, L and H. In this organism, the P 'protein' is a heterodimer of two subunits.

The enzyme catalyses N(6)-[(R)-lipoyl]-L-lysyl-[glycine-cleavage complex H protein] + glycine + H(+) = N(6)-[(R)-S(8)-aminomethyldihydrolipoyl]-L-lysyl-[glycine-cleavage complex H protein] + CO2. Its function is as follows. The glycine cleavage system catalyzes the degradation of glycine. The P protein binds the alpha-amino group of glycine through its pyridoxal phosphate cofactor; CO(2) is released and the remaining methylamine moiety is then transferred to the lipoamide cofactor of the H protein. This chain is Probable glycine dehydrogenase (decarboxylating) subunit 1, found in Lysinibacillus sphaericus (strain C3-41).